A 415-amino-acid polypeptide reads, in one-letter code: MRLLDDLQAGLAAIDAAHLRRVRRTAYSPTDRSQRISVPGEAPRDILGFCGNDYLGLAAHPALVEAMTQGTQQYGFGSGASHLVSGHSIAHARLEARMAALQGEHIPEADALFFCTGYMANLAVVSAMAQAGGIRPAEECTIFSDALNHASLIDGARLSRAPIKVYPHVDLAALEALLAASTSRNKLIVTDGVFSMDGDIAPLPELLALAERYDAWLIVDDAHGLGVLGENGAGVLSHFGLHSQRIIYVGTFGKAAGGSGAAIVGHRLVIDWLVQRARTYIFTTATPPGIACAVEAALDLIASEEGDERRARLDRHIAVWSAHAQRLAARFGWQWMPSPTAIQPIVIGENAPALALAAALEHEGIRIAAIRPPTVPAGTARLRITLSAAHTDADIERLAQALEAAGQSLQPAKAA.

Position 21 (R21) interacts with substrate. 117 to 118 provides a ligand contact to pyridoxal 5'-phosphate; sequence GY. H149 is a substrate binding site. Pyridoxal 5'-phosphate is bound by residues S195, H223, and T251. Position 254 is an N6-(pyridoxal phosphate)lysine (K254). Substrate is bound at residue T374.

It belongs to the class-II pyridoxal-phosphate-dependent aminotransferase family. BioF subfamily. In terms of assembly, homodimer. Pyridoxal 5'-phosphate serves as cofactor.

The enzyme catalyses 6-carboxyhexanoyl-[ACP] + L-alanine + H(+) = (8S)-8-amino-7-oxononanoate + holo-[ACP] + CO2. Its pathway is cofactor biosynthesis; biotin biosynthesis. Its function is as follows. Catalyzes the decarboxylative condensation of pimeloyl-[acyl-carrier protein] and L-alanine to produce 8-amino-7-oxononanoate (AON), [acyl-carrier protein], and carbon dioxide. This chain is 8-amino-7-oxononanoate synthase, found in Ralstonia pickettii (strain 12J).